The chain runs to 134 residues: Ribosome-binding factor A (134 aa).

It belongs to the RbfA family. As to quaternary structure, monomer. Binds 30S ribosomal subunits, but not 50S ribosomal subunits or 70S ribosomes.

The protein resides in the cytoplasm. Its function is as follows. One of several proteins that assist in the late maturation steps of the functional core of the 30S ribosomal subunit. Associates with free 30S ribosomal subunits (but not with 30S subunits that are part of 70S ribosomes or polysomes). Required for efficient processing of 16S rRNA. May interact with the 5'-terminal helix region of 16S rRNA. In Bdellovibrio bacteriovorus (strain ATCC 15356 / DSM 50701 / NCIMB 9529 / HD100), this protein is Ribosome-binding factor A.